The sequence spans 214 residues: Ribosomal RNA small subunit methyltransferase G (214 aa).

Residues glycine 77, phenylalanine 82, 128–129, and arginine 143 contribute to the S-adenosyl-L-methionine site; that span reads VE.

It belongs to the methyltransferase superfamily. RNA methyltransferase RsmG family.

The protein resides in the cytoplasm. The enzyme catalyses guanosine(527) in 16S rRNA + S-adenosyl-L-methionine = N(7)-methylguanosine(527) in 16S rRNA + S-adenosyl-L-homocysteine. Its function is as follows. Specifically methylates the N7 position of guanine in position 527 of 16S rRNA. This Nitrosomonas europaea (strain ATCC 19718 / CIP 103999 / KCTC 2705 / NBRC 14298) protein is Ribosomal RNA small subunit methyltransferase G.